Consider the following 72-residue polypeptide: Thiostrepton (72 aa).

A propeptide spanning residues 1–55 (MDATAIHERWSVMSNASIGQEIGVEGLTGLDVDALEISDYVDETLLDGEDLTVTM) is cleaved from the precursor. A cross-link (4-(1-hydroxyethyl)-7-isoleucino-2-(threonin-O3-ylcarbonyl)-7,8-dihydroquinolin-8-ol (Ile-Thr)) is located at residues 56 to 67 (IASASCTTCICT). Ser58 is subject to 2,3-didehydroalanine (Ser). The segment at residues 60–61 (SC) is a cross-link (thiazole-4-carboxylic acid (Ser-Cys)). Residues 60-68 (SCTTCICTC) constitute a cross-link (5-amino-piperideine-2,5-dicarboxylic acid (Ser-Cys) (with S-69)). A cross-link (5-amino-piperideine-2,5-dicarboxylic acid (Ser-Ser) (with C-68)) is located at residues 60–69 (SCTTCICTCS). Thr63 is subject to (Z)-2,3-didehydrobutyrine. Residues 63 to 64 (TC) constitute a cross-link ((4S)-thiazoline-4-carboxylic acid (Thr-Cys)). Ile65 carries the post-translational modification (3S,4R)-3,4-dihydroxyisoleucine. Positions 65–66 (IC) form a cross-link, thiazole-4-carboxylic acid (Ile-Cys). A cross-link (thiazole-4-carboxylic acid (Thr-Cys)) is located at residues 67-68 (TC). Residues 69–70 (SC) constitute a cross-link (thiazole-4-carboxylic acid (Ser-Cys)). A 2,3-didehydroalanine (Ser) mark is found at Ser71 and Ser72. At Ser72 the chain carries Serine amide.

The protein belongs to the thiocillin family. In terms of processing, maturation of thiazole and oxazole containing antibiotics involves the enzymatic condensation of a Cys, Ser or Thr with the alpha-carbonyl of the preceding amino acid to form a thioether or ether bond, then dehydration to form a double bond with the alpha-amino nitrogen. Thiazoline or oxazoline ring are dehydrogenated to form thiazole or oxazole rings. Maturation of pyridinyl containing antibiotics involves the cross-linking of a Ser and a Cys-Ser pair usually separated by 7 or 8 residues along the peptide chain. The Ser residues are dehydrated to didehydroalanines, then bonded between their beta carbons. The alpha carbonyl of the Cys condenses with alpha carbon of the first Ser to form a pyridinyl ring. The ring may be multiply dehydrogenated to form a pyridine ring with loss of the amino nitrogen of the first Ser. Post-translationally, the amidation of Ser-72 probably does not occur by the same mechanism, oxidative cleavage of glycine, as in eukaryotes. In terms of processing, the structure of the 2,3-didehydrobutyrin is shown to be Z-isomer.

Its subcellular location is the secreted. Functionally, has bacteriocidal activity. Inhibits bacterial protein biosynthesis by acting on the elongation factor Tu (EF-Tu). This is Thiostrepton (tpdA) from Streptomyces azureus.